The chain runs to 81 residues: Exodeoxyribonuclease 7 small subunit (81 aa).

The protein belongs to the XseB family. As to quaternary structure, heterooligomer composed of large and small subunits.

It is found in the cytoplasm. The catalysed reaction is Exonucleolytic cleavage in either 5'- to 3'- or 3'- to 5'-direction to yield nucleoside 5'-phosphates.. Its function is as follows. Bidirectionally degrades single-stranded DNA into large acid-insoluble oligonucleotides, which are then degraded further into small acid-soluble oligonucleotides. This Paramagnetospirillum magneticum (strain ATCC 700264 / AMB-1) (Magnetospirillum magneticum) protein is Exodeoxyribonuclease 7 small subunit.